Here is a 248-residue protein sequence, read N- to C-terminus: Probable transcriptional regulatory protein PSPPH_3775 (248 aa).

The protein belongs to the TACO1 family.

Its subcellular location is the cytoplasm. The polypeptide is Probable transcriptional regulatory protein PSPPH_3775 (Pseudomonas savastanoi pv. phaseolicola (strain 1448A / Race 6) (Pseudomonas syringae pv. phaseolicola (strain 1448A / Race 6))).